A 271-amino-acid polypeptide reads, in one-letter code: Glutamate racemase (271 aa).

Residues 10–11 (DS) and 42–43 (YG) contribute to the substrate site. The active-site Proton donor/acceptor is cysteine 73. 74 to 75 (NT) is a substrate binding site. The Proton donor/acceptor role is filled by cysteine 183. A substrate-binding site is contributed by 184–185 (TH).

Belongs to the aspartate/glutamate racemases family.

The catalysed reaction is L-glutamate = D-glutamate. It functions in the pathway cell wall biogenesis; peptidoglycan biosynthesis. Its function is as follows. Provides the (R)-glutamate required for cell wall biosynthesis. The protein is Glutamate racemase of Lactococcus lactis subsp. cremoris (strain SK11).